Here is a 290-residue protein sequence, read N- to C-terminus: ATP synthase gamma chain (290 aa).

The protein belongs to the ATPase gamma chain family. F-type ATPases have 2 components, CF(1) - the catalytic core - and CF(0) - the membrane proton channel. CF(1) has five subunits: alpha(3), beta(3), gamma(1), delta(1), epsilon(1). CF(0) has three main subunits: a, b and c.

It is found in the cell membrane. Produces ATP from ADP in the presence of a proton gradient across the membrane. The gamma chain is believed to be important in regulating ATPase activity and the flow of protons through the CF(0) complex. In Roseiflexus castenholzii (strain DSM 13941 / HLO8), this protein is ATP synthase gamma chain.